A 258-amino-acid chain; its full sequence is Triosephosphate isomerase (258 aa).

Residue 11 to 13 (NWK) participates in substrate binding. H101 serves as the catalytic Electrophile. E173 (proton acceptor) is an active-site residue. Residues G179, S219, and 240 to 241 (GG) each bind substrate.

It belongs to the triosephosphate isomerase family. In terms of assembly, homodimer.

It is found in the cytoplasm. The enzyme catalyses D-glyceraldehyde 3-phosphate = dihydroxyacetone phosphate. The protein operates within carbohydrate biosynthesis; gluconeogenesis. It participates in carbohydrate degradation; glycolysis; D-glyceraldehyde 3-phosphate from glycerone phosphate: step 1/1. In terms of biological role, involved in the gluconeogenesis. Catalyzes stereospecifically the conversion of dihydroxyacetone phosphate (DHAP) to D-glyceraldehyde-3-phosphate (G3P). The sequence is that of Triosephosphate isomerase from Streptomyces avermitilis (strain ATCC 31267 / DSM 46492 / JCM 5070 / NBRC 14893 / NCIMB 12804 / NRRL 8165 / MA-4680).